We begin with the raw amino-acid sequence, 647 residues long: Threonine--tRNA ligase (647 aa).

In terms of domain architecture, TGS spans 1 to 61 (MIKITFPDGA…TEDGAIEIVT (61 aa)). The interval 242 to 540 (DHRKLGKELD…LIENYKGAFP (299 aa)) is catalytic. Positions 336, 387, and 517 each coordinate Zn(2+).

It belongs to the class-II aminoacyl-tRNA synthetase family. In terms of assembly, homodimer. Requires Zn(2+) as cofactor.

The protein resides in the cytoplasm. It catalyses the reaction tRNA(Thr) + L-threonine + ATP = L-threonyl-tRNA(Thr) + AMP + diphosphate + H(+). In terms of biological role, catalyzes the attachment of threonine to tRNA(Thr) in a two-step reaction: L-threonine is first activated by ATP to form Thr-AMP and then transferred to the acceptor end of tRNA(Thr). Also edits incorrectly charged L-seryl-tRNA(Thr). The protein is Threonine--tRNA ligase of Streptococcus sanguinis (strain SK36).